A 454-amino-acid polypeptide reads, in one-letter code: L-cysteine desulfhydrase-like protein lolT1 (454 aa).

An N6-(pyridoxal phosphate)lysine modification is found at lysine 227.

Belongs to the class-V pyridoxal-phosphate-dependent aminotransferase family. The cofactor is pyridoxal 5'-phosphate.

It participates in alkaloid biosynthesis. Functionally, L-cysteine desulfhydrase-like protein; part of the gene cluster that mediates the biosynthesis of loline alkaloids, potent insecticidal agents composed of a pyrrolizidine ring system and an uncommon ether bridge linking carbons 2 and 7. Lolines are structurally differentiated by the various modifications of the L-amino group and include norloline, loline, N-methylloline, N-acetylloline, N-acetylnorloline, and N-formylloline. The first committed step is the condensation of O-acetyl-L-homoserine (derived from L-aspartic acid) and L-proline, probably catalyzed by the gamma-type pyridoxal 5'-phosphate(PLP)-dependent enzyme lolC, to give the diamino diacid, NACPP. Ensuing cyclization, decarboxylation, and acetylation steps yield 1-exo-acetamidopyrrolizidine (AcAP). LolO is required for installation of the ether bridge upon the pathway intermediate, 1-exo-acetamidopyrrolizidine (AcAP). In sequential 2-oxoglutarate- and O(2)-consuming steps, lolO removes hydrogens from C2 and C7 of AcAP to form both carbon-oxygen bonds in N-acetylnorloline (NANL), the precursor to all other lolines. The enzymes lolD, lolE, lolF and lolT have also been proposed to be involved in the ether-bridge installation. Further processing of the exocyclic moiety of NANL by fungal N-acetamidase (LolN), methyltransferase (LolM), and cytochrome P450 (LolP) enzymes, with occasional involvement of a plant acetyltransferase, generates the other known lolines. LolN transforms NANL to norlonine which is monomethylated and dimethylated to respectively lonine and N-methyllonine (NML) by lolM. LolP catalyzes hydroxylation of the methyl group in N-methylloline (NML) and further oxygenation to N-formylloline (NFL). A plant acetyltransferase is responsible for the acetylation of loline to form N-acetylloline (NAL). LolA might interact with aspartate kinase to prevent feedback inhibition of its activity by these end products and thereby promote production of L-homoserine from L-aspartate. The protein is L-cysteine desulfhydrase-like protein lolT1 of Epichloe uncinata (Endophyte fungus).